Reading from the N-terminus, the 95-residue chain is CRISPR-associated endoribonuclease Cas2 3 (95 aa).

Aspartate 7 contacts Mg(2+).

Belongs to the CRISPR-associated endoribonuclease Cas2 protein family. In terms of assembly, homodimer, forms a heterotetramer with a Cas1 homodimer. Requires Mg(2+) as cofactor.

In terms of biological role, CRISPR (clustered regularly interspaced short palindromic repeat), is an adaptive immune system that provides protection against mobile genetic elements (viruses, transposable elements and conjugative plasmids). CRISPR clusters contain sequences complementary to antecedent mobile elements and target invading nucleic acids. CRISPR clusters are transcribed and processed into CRISPR RNA (crRNA). Functions as a ssRNA-specific endoribonuclease. Involved in the integration of spacer DNA into the CRISPR cassette. This chain is CRISPR-associated endoribonuclease Cas2 3, found in Rhodospirillum rubrum (strain ATCC 11170 / ATH 1.1.1 / DSM 467 / LMG 4362 / NCIMB 8255 / S1).